The chain runs to 736 residues: ATP-dependent zinc metalloprotease FtsH (736 aa).

Disordered regions lie at residues 1–39 (MDSN…GQQR) and 57–83 (QQTQ…RKKM). The Cytoplasmic segment spans residues 1 to 87 (MDSNVDSQRV…ADRKKMPPGK (87 aa)). The segment covering 57–73 (QQTQNRTGFASADTKQG) has biased composition (polar residues). Residues 88 to 108 (AWLWFVLILIVNFLMVRLLIP) traverse the membrane as a helical segment. Residues 109–205 (DAEQPVMVPY…KPIHEERSPW (97 aa)) are Periplasmic-facing. A helical membrane pass occupies residues 206–226 (ATIVYSFGPGLLFIAFYIWLF). Topologically, residues 227-736 (RRMAQQGGLG…VSLPGVAGPS (510 aa)) are cytoplasmic. 301 to 308 (GAPGTGKT) serves as a coordination point for ATP. His-522 contributes to the Zn(2+) binding site. Glu-523 is a catalytic residue. Positions 526 and 598 each coordinate Zn(2+). Residues 706 to 736 (PALDAGKLPVPDGGDKNAEPSVSLPGVAGPS) are disordered.

The protein in the central section; belongs to the AAA ATPase family. In the C-terminal section; belongs to the peptidase M41 family. In terms of assembly, homohexamer. Zn(2+) serves as cofactor.

Its subcellular location is the cell inner membrane. In terms of biological role, acts as a processive, ATP-dependent zinc metallopeptidase for both cytoplasmic and membrane proteins. Plays a role in the quality control of integral membrane proteins. The polypeptide is ATP-dependent zinc metalloprotease FtsH (Syntrophus aciditrophicus (strain SB)).